The chain runs to 355 residues: tRNA uridine(34) hydroxylase (355 aa).

The region spanning 146-240 (DDPDTLFVDM…YARKAKEQGL (95 aa)) is the Rhodanese domain. Cys200 serves as the catalytic Cysteine persulfide intermediate. Positions 333-355 (NKSKGLLQATMHIPSPEKSADEK) are disordered.

This sequence belongs to the TrhO family.

It carries out the reaction uridine(34) in tRNA + AH2 + O2 = 5-hydroxyuridine(34) in tRNA + A + H2O. Catalyzes oxygen-dependent 5-hydroxyuridine (ho5U) modification at position 34 in tRNAs. This Yersinia pseudotuberculosis serotype O:1b (strain IP 31758) protein is tRNA uridine(34) hydroxylase.